A 216-amino-acid chain; its full sequence is Fibroblast growth factor 17 (216 aa).

An N-terminal signal peptide occupies residues 1–22 (MGAARLLPNLTLCLQLLILCCQ). Asparagine 137 carries N-linked (GlcNAc...) asparagine glycosylation. The interval 190–216 (EKQKQFEFVGSAPTRRTKRTRRPQPLT) is disordered. Over residues 204–216 (RRTKRTRRPQPLT) the composition is skewed to basic residues.

The protein belongs to the heparin-binding growth factors family. In terms of assembly, interacts with FGFR3 and FGFR4. In terms of tissue distribution, preferentially expressed in the embryonic brain.

It localises to the secreted. Functionally, plays an important role in the regulation of embryonic development and as signaling molecule in the induction and patterning of the embryonic brain. Required for normal brain development. The sequence is that of Fibroblast growth factor 17 (FGF17) from Homo sapiens (Human).